We begin with the raw amino-acid sequence, 93 residues long: Alpha-elapitoxin-Oh3a (93 aa).

Positions 1 to 21 (MKTLLLTLVVVTIVCLDLGYT) are cleaved as a signal peptide. Intrachain disulfides connect Cys24–Cys42, Cys35–Cys63, Cys48–Cys52, Cys67–Cys78, and Cys79–Cys84.

The protein belongs to the three-finger toxin family. Long-chain subfamily. Type II alpha-neurotoxin sub-subfamily. As to expression, expressed by the venom gland.

It is found in the secreted. Binds to muscular and neuronal nicotinic acetylcholine receptor (nAChR) and inhibits acetylcholine from binding to the receptor, thereby impairing neuromuscular and neuronal transmission. Pseudo-irreversibly inhibits twitches in chick biventer cervicis nerve-muscle preparations in a concentration-dependent manner. This is Alpha-elapitoxin-Oh3a from Ophiophagus hannah (King cobra).